The following is a 421-amino-acid chain: Medium-chain specific acyl-CoA dehydrogenase, mitochondrial (421 aa).

A mitochondrion-targeting transit peptide spans 1–25 (MAAALRRGYKVLRSVSHFECRAQHT). N6-acetyllysine; alternate is present on K69. At K69 the chain carries N6-succinyllysine; alternate. Residue K79 is modified to N6-acetyllysine. FAD is bound at residue 158–167 (YCVTEPSAGS). S167 provides a ligand contact to octanoyl-CoA. K179 is subject to N6-succinyllysine. 191–193 (WIT) contacts FAD. K212 bears the N6-acetyllysine; alternate mark. Position 212 is an N6-succinyllysine; alternate (K212). S216 contacts octanoyl-CoA. An N6-acetyllysine; alternate mark is found at K217, K259, and K271. N6-succinyllysine; alternate is present on residues K217, K259, and K271. D278 and R281 together coordinate octanoyl-CoA. Residue K301 is modified to N6-acetyllysine. FAD contacts are provided by residues 306 to 308 (RKT) and 316 to 317 (HQ). Residues R349 and T351 each contribute to the octanoyl-CoA site. T351 bears the Phosphothreonine mark. 374–378 (QIFGG) provides a ligand contact to FAD. E401 contributes to the octanoyl-CoA binding site. The active-site Proton acceptor is the E401. 402–405 (GTAQ) contributes to the FAD binding site.

It belongs to the acyl-CoA dehydrogenase family. As to quaternary structure, homotetramer. Interacts with the heterodimeric electron transfer flavoprotein ETF. FAD serves as cofactor. In terms of processing, acetylated. Could occur at proximity of the cofactor-binding sites and reduce the catalytic activity. Could be deacetylated by SIRT3.

The protein resides in the mitochondrion matrix. It carries out the reaction a medium-chain 2,3-saturated fatty acyl-CoA + oxidized [electron-transfer flavoprotein] + H(+) = a medium-chain (2E)-enoyl-CoA + reduced [electron-transfer flavoprotein]. It catalyses the reaction pentanoyl-CoA + oxidized [electron-transfer flavoprotein] + H(+) = (2E)-pentenoyl-CoA + reduced [electron-transfer flavoprotein]. The enzyme catalyses hexanoyl-CoA + oxidized [electron-transfer flavoprotein] + H(+) = (2E)-hexenoyl-CoA + reduced [electron-transfer flavoprotein]. The catalysed reaction is octanoyl-CoA + oxidized [electron-transfer flavoprotein] + H(+) = (2E)-octenoyl-CoA + reduced [electron-transfer flavoprotein]. It carries out the reaction decanoyl-CoA + oxidized [electron-transfer flavoprotein] + H(+) = (2E)-decenoyl-CoA + reduced [electron-transfer flavoprotein]. It catalyses the reaction dodecanoyl-CoA + oxidized [electron-transfer flavoprotein] + H(+) = (2E)-dodecenoyl-CoA + reduced [electron-transfer flavoprotein]. The enzyme catalyses tetradecanoyl-CoA + oxidized [electron-transfer flavoprotein] + H(+) = (2E)-tetradecenoyl-CoA + reduced [electron-transfer flavoprotein]. The catalysed reaction is oxidized [electron-transfer flavoprotein] + hexadecanoyl-CoA + H(+) = (2E)-hexadecenoyl-CoA + reduced [electron-transfer flavoprotein]. The protein operates within lipid metabolism; mitochondrial fatty acid beta-oxidation. In terms of biological role, medium-chain specific acyl-CoA dehydrogenase is one of the acyl-CoA dehydrogenases that catalyze the first step of mitochondrial fatty acid beta-oxidation, an aerobic process breaking down fatty acids into acetyl-CoA and allowing the production of energy from fats. The first step of fatty acid beta-oxidation consists in the removal of one hydrogen from C-2 and C-3 of the straight-chain fatty acyl-CoA thioester, resulting in the formation of trans-2-enoyl-CoA. Electron transfer flavoprotein (ETF) is the electron acceptor that transfers electrons to the main mitochondrial respiratory chain via ETF-ubiquinone oxidoreductase (ETF dehydrogenase). Among the different mitochondrial acyl-CoA dehydrogenases, medium-chain specific acyl-CoA dehydrogenase acts specifically on acyl-CoAs with saturated 6 to 12 carbons long primary chains. This Rattus norvegicus (Rat) protein is Medium-chain specific acyl-CoA dehydrogenase, mitochondrial.